Here is a 412-residue protein sequence, read N- to C-terminus: Nucleoside transporter 1 (412 aa).

The interval Met-1 to Glu-21 is disordered. The Cytoplasmic segment spans residues Met-1–Ser-29. The segment covering Ser-7 to Glu-21 has biased composition (polar residues). A helical membrane pass occupies residues Ile-30–Ala-50. Residues Leu-51–Lys-56 lie on the Extracellular side of the membrane. A helical membrane pass occupies residues Ile-57–Val-77. At Asn-78 to Arg-81 the chain is on the cytoplasmic side. A helical transmembrane segment spans residues Val-82–His-102. The Extracellular segment spans residues Gln-103 to Cys-114. A helical transmembrane segment spans residues Leu-115–Ile-135. The Cytoplasmic segment spans residues Gly-136–Ser-144. A helical transmembrane segment spans residues Gly-145–Leu-165. At Asp-166–Lys-181 the chain is on the extracellular side. Residues Leu-182 to Leu-202 traverse the membrane as a helical segment. At Tyr-203–Lys-240 the chain is on the cytoplasmic side. The chain crosses the membrane as a helical span at residues Ala-241 to His-261. At Lys-262–Thr-271 the chain is on the extracellular side. A helical membrane pass occupies residues Asp-272 to Asn-294. Residues Phe-295–Thr-310 lie on the Cytoplasmic side of the membrane. Residues Leu-311–Ile-331 form a helical membrane-spanning segment. The Extracellular portion of the chain corresponds to Ser-332–Cys-343. A helical transmembrane segment spans residues Val-344–Phe-364. Residues Val-365–Arg-382 lie on the Cytoplasmic side of the membrane. A helical transmembrane segment spans residues Ile-383–Asp-403. Topologically, residues Tyr-404 to Asn-412 are extracellular.

This sequence belongs to the SLC29A/ENT transporter (TC 2.A.57) family.

It localises to the cell membrane. It catalyses the reaction inosine(in) = inosine(out). The catalysed reaction is adenosine(in) = adenosine(out). It carries out the reaction hypoxanthine(out) = hypoxanthine(in). The enzyme catalyses guanosine(in) = guanosine(out). It catalyses the reaction guanine(out) = guanine(in). The catalysed reaction is thymidine(in) = thymidine(out). It carries out the reaction uridine(out) = uridine(in). The enzyme catalyses uracil(in) = uracil(out). It catalyses the reaction thymine(out) = thymine(in). The catalysed reaction is adenine(out) = adenine(in). It carries out the reaction cytosine(out) = cytosine(in). The enzyme catalyses xanthine(out) = xanthine(in). Its function is as follows. Nucleoside and nucleobase transporter with a broad substrate specificity. The polypeptide is Nucleoside transporter 1 (Plasmodium berghei (strain Anka)).